The chain runs to 477 residues: Aspartyl/glutamyl-tRNA(Asn/Gln) amidotransferase subunit B (477 aa).

It belongs to the GatB/GatE family. GatB subfamily. In terms of assembly, heterotrimer of A, B and C subunits.

It catalyses the reaction L-glutamyl-tRNA(Gln) + L-glutamine + ATP + H2O = L-glutaminyl-tRNA(Gln) + L-glutamate + ADP + phosphate + H(+). The catalysed reaction is L-aspartyl-tRNA(Asn) + L-glutamine + ATP + H2O = L-asparaginyl-tRNA(Asn) + L-glutamate + ADP + phosphate + 2 H(+). Allows the formation of correctly charged Asn-tRNA(Asn) or Gln-tRNA(Gln) through the transamidation of misacylated Asp-tRNA(Asn) or Glu-tRNA(Gln) in organisms which lack either or both of asparaginyl-tRNA or glutaminyl-tRNA synthetases. The reaction takes place in the presence of glutamine and ATP through an activated phospho-Asp-tRNA(Asn) or phospho-Glu-tRNA(Gln). In Sulfurovum sp. (strain NBC37-1), this protein is Aspartyl/glutamyl-tRNA(Asn/Gln) amidotransferase subunit B.